Reading from the N-terminus, the 319-residue chain is ATP-dependent 6-phosphofructokinase (319 aa).

Residue Gly-11 participates in ATP binding. ADP is bound by residues 21–25 (RSVVR) and Asp-59. ATP-binding positions include 72 to 73 (RC) and 102 to 105 (GDGS). Asp-103 lines the Mg(2+) pocket. 125–127 (TID) is a substrate binding site. Asp-127 acts as the Proton acceptor in catalysis. Arg-154 is an ADP binding site. Residues Arg-162 and 169 to 171 (MGR) contribute to the substrate site. ADP contacts are provided by residues 185–187 (GAE), Arg-211, and 213–215 (KKH). Substrate contacts are provided by residues Glu-222, Arg-243, and 249-252 (HVQR).

The protein belongs to the phosphofructokinase type A (PFKA) family. ATP-dependent PFK group I subfamily. Prokaryotic clade 'B1' sub-subfamily. Homotetramer. It depends on Mg(2+) as a cofactor.

The protein localises to the cytoplasm. The enzyme catalyses beta-D-fructose 6-phosphate + ATP = beta-D-fructose 1,6-bisphosphate + ADP + H(+). It participates in carbohydrate degradation; glycolysis; D-glyceraldehyde 3-phosphate and glycerone phosphate from D-glucose: step 3/4. Its activity is regulated as follows. Allosterically activated by ADP and other diphosphonucleosides, and allosterically inhibited by phosphoenolpyruvate. Its function is as follows. Catalyzes the phosphorylation of D-fructose 6-phosphate to fructose 1,6-bisphosphate by ATP, the first committing step of glycolysis. This Geobacillus stearothermophilus (Bacillus stearothermophilus) protein is ATP-dependent 6-phosphofructokinase.